The sequence spans 377 residues: tRNA/tmRNA (uracil-C(5))-methyltransferase (377 aa).

Positions 199, 227, 232, 248, and 308 each coordinate S-adenosyl-L-methionine. Cys333 (nucleophile) is an active-site residue. Catalysis depends on Glu367, which acts as the Proton acceptor.

It belongs to the class I-like SAM-binding methyltransferase superfamily. RNA M5U methyltransferase family. TrmA subfamily.

It catalyses the reaction uridine(54) in tRNA + S-adenosyl-L-methionine = 5-methyluridine(54) in tRNA + S-adenosyl-L-homocysteine + H(+). It carries out the reaction uridine(341) in tmRNA + S-adenosyl-L-methionine = 5-methyluridine(341) in tmRNA + S-adenosyl-L-homocysteine + H(+). Dual-specificity methyltransferase that catalyzes the formation of 5-methyluridine at position 54 (m5U54) in all tRNAs, and that of position 341 (m5U341) in tmRNA (transfer-mRNA). In Aeromonas salmonicida (strain A449), this protein is tRNA/tmRNA (uracil-C(5))-methyltransferase.